A 184-amino-acid polypeptide reads, in one-letter code: V-type proton ATPase subunit E (184 aa).

Belongs to the V-ATPase E subunit family.

Its function is as follows. Produces ATP from ADP in the presence of a proton gradient across the membrane. This chain is V-type proton ATPase subunit E, found in Finegoldia magna (strain ATCC 29328 / DSM 20472 / WAL 2508) (Peptostreptococcus magnus).